We begin with the raw amino-acid sequence, 521 residues long: U4/U6 small nuclear ribonucleoprotein Prp4 (521 aa).

At Lys-26 the chain carries N6-acetyllysine. WD repeat units lie at residues 229–268, 271–318, 321–360, 363–402, 405–444, 447–487, and 490–521; these read DDRPISYCHFSPNSKMLATACWSGLCKLWSVPDCNLLHTL, HNTN…VADI, HTVRVARVTWHPSGRFLGTTCYDRSWRLWDLEAQEEILHQ, HSMGVYDIAFHQDGSLAGTGGLDAFGRVWDLRTGRCIMFL, HLKEIYGINFSPNGYHIATGSGDNTCKVWDLRQRRCVYTI, HQNL…LKTL, and HEGKVMGLDISSDGQLIATCSYDRTFKLWMAE.

Component of the precatalytic spliceosome (spliceosome B complex). Component of the U4/U6-U5 tri-snRNP complex, a building block of the precatalytic spliceosome (spliceosome B complex). The U4/U6-U5 tri-snRNP complex is composed of the U4, U6 and U5 snRNAs and at least PRPF3, PRPF4, PRPF6, PRPF8, PRPF31, SNRNP200, TXNL4A, SNRNP40, SNRPB, SNRPD1, SNRPD2, SNRPD3, SNRPE, SNRPF, SNRPG, DDX23, CD2BP2, PPIH, SNU13, EFTUD2, SART1 and USP39, plus LSM2, LSM3, LSM4, LSM5, LSM6, LSM7 and LSM8. Interacts directly with PRPF18, PPIH and PRPF3. Part of a heteromeric complex containing PPIH, PRPF3 and PRPF4 that is stable in the absence of RNA. Interacts with ERCC6.

It is found in the nucleus. The protein resides in the nucleus speckle. Functionally, plays a role in pre-mRNA splicing as component of the U4/U6-U5 tri-snRNP complex that is involved in spliceosome assembly, and as component of the precatalytic spliceosome (spliceosome B complex). This is U4/U6 small nuclear ribonucleoprotein Prp4 (PRPF4) from Bos taurus (Bovine).